Consider the following 126-residue polypeptide: QLELPVKYAVYLIVTSGEASTTYLNFTTSEKTIQTMKHQYKFTNLGKRSLPISVVFWVPVRLNNEIVWDRPQVTFSPNLSSACNTEERSPPHSDFLAELEKTHVLNCSIAVCQRIACDIPYFNIQE.

N-linked (GlcNAc...) asparagine glycosylation is found at asparagine 25, asparagine 78, and asparagine 106.

Belongs to the integrin alpha chain family. As to quaternary structure, heterodimer of an alpha and a beta chain. ITGAM associates with ITGB2. Found in a complex with CD177 and ITGB2/CD18. Interacts with JAM3. Interacts with THBD. Interacts with TMEM268; this interaction inhibits ITGAM degradation via the endosome-lysosome pathway.

The protein resides in the cell membrane. It is found in the membrane raft. In terms of biological role, integrin ITGAM/ITGB2 is implicated in various adhesive interactions of monocytes, macrophages and granulocytes as well as in mediating the uptake of complement-coated particles. It is identical with CR-3, the receptor for the iC3b fragment of the third complement component. It probably recognizes the R-G-D peptide in C3b. Integrin ITGAM/ITGB2 is also a receptor for fibrinogen, factor X and ICAM1. It recognizes P1 and P2 peptides of fibrinogen gamma chain. Regulates neutrophil migration. In association with beta subunit ITGB2/CD18, required for CD177-PRTN3-mediated activation of TNF primed neutrophils. May regulate phagocytosis-induced apoptosis in extravasated neutrophils. May play a role in mast cell development. Required with TYROBP/DAP12 in microglia to control production of microglial superoxide ions which promote the neuronal apoptosis that occurs during brain development. The polypeptide is Integrin alpha-M (ITGAM) (Cavia porcellus (Guinea pig)).